Consider the following 225-residue polypeptide: Uracil-DNA glycosylase (225 aa).

D65 serves as the catalytic Proton acceptor.

Belongs to the uracil-DNA glycosylase (UDG) superfamily. UNG family.

It localises to the cytoplasm. It carries out the reaction Hydrolyzes single-stranded DNA or mismatched double-stranded DNA and polynucleotides, releasing free uracil.. Its function is as follows. Excises uracil residues from the DNA which can arise as a result of misincorporation of dUMP residues by DNA polymerase or due to deamination of cytosine. In Clostridium perfringens (strain ATCC 13124 / DSM 756 / JCM 1290 / NCIMB 6125 / NCTC 8237 / Type A), this protein is Uracil-DNA glycosylase.